The primary structure comprises 302 residues: Recombination-associated protein RdgC (302 aa).

The protein belongs to the RdgC family.

It is found in the cytoplasm. The protein localises to the nucleoid. Its function is as follows. May be involved in recombination. The sequence is that of Recombination-associated protein RdgC from Psychromonas ingrahamii (strain DSM 17664 / CCUG 51855 / 37).